Reading from the N-terminus, the 377-residue chain is 3-dehydroquinate synthase (377 aa).

NAD(+)-binding positions include 115–119 (GVIGD), 139–140 (TS), K152, and K162. Zn(2+)-binding residues include E195, H257, and H276.

The protein belongs to the sugar phosphate cyclases superfamily. Dehydroquinate synthase family. The cofactor is Co(2+). It depends on Zn(2+) as a cofactor. NAD(+) serves as cofactor.

Its subcellular location is the cytoplasm. The enzyme catalyses 7-phospho-2-dehydro-3-deoxy-D-arabino-heptonate = 3-dehydroquinate + phosphate. It functions in the pathway metabolic intermediate biosynthesis; chorismate biosynthesis; chorismate from D-erythrose 4-phosphate and phosphoenolpyruvate: step 2/7. Its function is as follows. Catalyzes the conversion of 3-deoxy-D-arabino-heptulosonate 7-phosphate (DAHP) to dehydroquinate (DHQ). This is 3-dehydroquinate synthase from Rhizobium etli (strain ATCC 51251 / DSM 11541 / JCM 21823 / NBRC 15573 / CFN 42).